Consider the following 342-residue polypeptide: tRNA dimethylallyltransferase (342 aa).

Residues 1–30 (MSANGPAAEPADGGRAVPAGGGEAVPAGGG) are disordered. Residues 19 to 30 (AGGGEAVPAGGG) are compositionally biased toward gly residues. 49 to 56 (GPTAAGKS) is an ATP binding site. 51–56 (TAAGKS) contacts substrate. The segment at 74–77 (DSMQ) is interaction with substrate tRNA.

This sequence belongs to the IPP transferase family. Monomer. Mg(2+) serves as cofactor.

It catalyses the reaction adenosine(37) in tRNA + dimethylallyl diphosphate = N(6)-dimethylallyladenosine(37) in tRNA + diphosphate. Functionally, catalyzes the transfer of a dimethylallyl group onto the adenine at position 37 in tRNAs that read codons beginning with uridine, leading to the formation of N6-(dimethylallyl)adenosine (i(6)A). In Salinispora arenicola (strain CNS-205), this protein is tRNA dimethylallyltransferase.